Here is a 456-residue protein sequence, read N- to C-terminus: Proline--tRNA ligase (456 aa).

It belongs to the class-II aminoacyl-tRNA synthetase family. ProS type 3 subfamily. In terms of assembly, homodimer.

It is found in the cytoplasm. The catalysed reaction is tRNA(Pro) + L-proline + ATP = L-prolyl-tRNA(Pro) + AMP + diphosphate. Its function is as follows. Catalyzes the attachment of proline to tRNA(Pro) in a two-step reaction: proline is first activated by ATP to form Pro-AMP and then transferred to the acceptor end of tRNA(Pro). The chain is Proline--tRNA ligase from Methanococcus aeolicus (strain ATCC BAA-1280 / DSM 17508 / OCM 812 / Nankai-3).